A 753-amino-acid chain; its full sequence is Nuclear hormone receptor family member daf-12 (753 aa).

Residues 1–109 (MGTNGGVIAE…PDDGLLDSSE (109 aa)) form a disordered region. The span at 20–29 (NPDKVEEPVV) shows a compositional bias: basic and acidic residues. Over residues 30-44 (RRKRVTRRRHRRIHS) the composition is skewed to basic residues. Residues 115-190 (QKTCRVCGDH…VGMKKEWILN (76 aa)) constitute a DNA-binding region (nuclear receptor). 2 consecutive NR C4-type zinc fingers follow at residues 118–138 (CRVC…CESC) and 154–173 (CPYS…CQKC). A Nuclear localization signal motif is present at residues 191–206 (EEQLRRRKNSRLNNTG). Disordered stretches follow at residues 198–251 (KNSR…TINP), 266–314 (NAMP…GYDP), and 376–410 (GHPM…EKNH). Positions 201–211 (RLNNTGTCNKR) are enriched in polar residues. Residues 212–227 (SQPGNQQSPQGPNQQP) show a composition bias toward low complexity. Polar residues-rich tracts occupy residues 285–301 (PVGS…SLTM) and 394–410 (MSLS…EKNH). An NR LBD domain is found at 516–753 (AELKALDAVR…ELPGEFFKIK (238 aa)).

This sequence belongs to the nuclear hormone receptor family. As to quaternary structure, interacts with din-1 isoform d. Expressed throughout muscles of the pharynx. Expressed in epidermal seam cells, the vulva, head neurons, mature spermatheca, uterus and intestine.

Its subcellular location is the nucleus. In terms of biological role, nuclear receptor which binds directly to response elements in target gene promoters. Activity is modulated by binding of steroid hormone ligands that include dafachronic acids. Regulates expression of genes involved in postembryonic development and the dauer diapause, in response to environmental cues. Inhibits the expression of let-7 family members when bound to corepressor din-1s which is an isoform of din-1. Plays a role in controlling the timing of seam cell development during the larval stages. Has a role in the immune response to bacterial infection, via regulation of let-7 miRNAs. Controls expression of genes that promote the aerobic catabolism of fatty acids for reproductive growth. May be involved in thermotolerance. This is Nuclear hormone receptor family member daf-12 from Caenorhabditis elegans.